Consider the following 115-residue polypeptide: Large ribosomal subunit protein P2z (115 aa).

The disordered stretch occupies residues Leu-62–Glu-115. Basic and acidic residues predominate over residues Glu-92 to Lys-102. Phosphoserine is present on Ser-105.

The protein belongs to the eukaryotic ribosomal protein P1/P2 family. In terms of assembly, P1 and P2 exist as dimers at the large ribosomal subunit. Post-translationally, phosphorylated.

Its function is as follows. Plays an important role in the elongation step of protein synthesis. In Arabidopsis thaliana (Mouse-ear cress), this protein is Large ribosomal subunit protein P2z (RPP2A).